The primary structure comprises 130 residues: UPF0102 protein Cthe_0758 (130 aa).

This sequence belongs to the UPF0102 family.

The chain is UPF0102 protein Cthe_0758 from Acetivibrio thermocellus (strain ATCC 27405 / DSM 1237 / JCM 9322 / NBRC 103400 / NCIMB 10682 / NRRL B-4536 / VPI 7372) (Clostridium thermocellum).